Consider the following 435-residue polypeptide: 3-phosphoshikimate 1-carboxyvinyltransferase (435 aa).

Lys-22, Ser-23, and Arg-27 together coordinate 3-phosphoshikimate. Lys-22 is a binding site for phosphoenolpyruvate. Phosphoenolpyruvate contacts are provided by Gly-95 and Arg-123. The 3-phosphoshikimate site is built by Ser-168, Gln-170, Asp-319, and Lys-346. Phosphoenolpyruvate is bound at residue Gln-170. Catalysis depends on Asp-319, which acts as the Proton acceptor. Positions 350 and 393 each coordinate phosphoenolpyruvate.

This sequence belongs to the EPSP synthase family. In terms of assembly, monomer.

It is found in the cytoplasm. The catalysed reaction is 3-phosphoshikimate + phosphoenolpyruvate = 5-O-(1-carboxyvinyl)-3-phosphoshikimate + phosphate. Its pathway is metabolic intermediate biosynthesis; chorismate biosynthesis; chorismate from D-erythrose 4-phosphate and phosphoenolpyruvate: step 6/7. Its function is as follows. Catalyzes the transfer of the enolpyruvyl moiety of phosphoenolpyruvate (PEP) to the 5-hydroxyl of shikimate-3-phosphate (S3P) to produce enolpyruvyl shikimate-3-phosphate and inorganic phosphate. This Chloroflexus aggregans (strain MD-66 / DSM 9485) protein is 3-phosphoshikimate 1-carboxyvinyltransferase.